We begin with the raw amino-acid sequence, 840 residues long: V-type proton ATPase 116 kDa subunit a 4 (840 aa).

Over 1 to 390 (MVSVFRSEEM…DAYGVGSYRE (390 aa)) the chain is Cytoplasmic. A helical membrane pass occupies residues 391–409 (INPAPYTIITFPFLFAVMF). The Vacuolar portion of the chain corresponds to 410-411 (GD). The chain crosses the membrane as a helical span at residues 412–428 (CGHGTVMLLAALWMILN). At 429–443 (ERRLLSQKTDNEIWN) the chain is on the cytoplasmic side. The helical transmembrane segment at 444 to 473 (TFFHGRYLILLMGIFSIYTGLIYNDCFSKS) threads the bilayer. At 474–538 (LNIFGSSWSV…ASNKLTFLNS (65 aa)) the chain is on the vacuolar side. The helical transmembrane segment at 539 to 558 (YKMKMSVILGIVQMVFGVIL) threads the bilayer. The Cytoplasmic segment spans residues 559 to 576 (SLFNHIYFRRTLNIILQF). The helical transmembrane segment at 577 to 597 (IPEMIFILCLFGYLVFMIIFK) threads the bilayer. At 598–642 (WCCFDVHVSQHAPSILIHFINMFLFNYSDSSNAPLYKHQQEVQSF) the chain is on the vacuolar side. Residues 643-662 (FVVMALISVPWMLLIKPFIL) traverse the membrane as a helical segment. Residues 663 to 727 (RASHRKSQLQ…DVFVHQAIHT (65 aa)) lie on the Cytoplasmic side of the membrane. Residues 675–704 (RIQEDATENIEGDSSSPSSRSGQRTSADTH) are disordered. A helical membrane pass occupies residues 728–752 (IEYCLGCISNTASYLRLWALSLAHA). Topologically, residues 753-773 (QLSEVLWTMVMNSGLQTRGWG) are vacuolar. A helical transmembrane segment spans residues 774-812 (GIVGVFIIFAVFAVLTVAILLIMEGLSAFLHALRLHWVE). The Cytoplasmic segment spans residues 813–840 (FQNKFYVGDGYKFSPFSFKHILDGTAEE).

Belongs to the V-ATPase 116 kDa subunit family. As to quaternary structure, V-ATPase is a heteromultimeric enzyme made up of two complexes: the ATP-hydrolytic V1 complex and the proton translocation V0 complex. The V1 complex consists of three catalytic AB heterodimers that form a heterohexamer, three peripheral stalks each consisting of EG heterodimers, one central rotor including subunits D and F, and the regulatory subunits C and H. The proton translocation complex V0 consists of the proton transport subunit a, a ring of proteolipid subunits c9c'', rotary subunit d, subunits e and f, and the accessory subunits ATP6AP1/Ac45 and ATP6AP2/PRR. Interacts with the V1 complex V-ATPase subunit A ATP6V1A. Interacts with the V0 complex V-ATPase subunit c ATP6V0C. As to expression, expressed in adult and fetal kidney. Found in the inner ear.

It localises to the apical cell membrane. The protein localises to the basolateral cell membrane. Its function is as follows. Subunit of the V0 complex of vacuolar(H+)-ATPase (V-ATPase), a multisubunit enzyme composed of a peripheral complex (V1) that hydrolyzes ATP and a membrane integral complex (V0) that translocates protons. V-ATPase is responsible for acidifying and maintaining the pH of intracellular compartments and in some cell types, is targeted to the plasma membrane, where it is responsible for acidifying the extracellular environment. Involved in normal vectorial acid transport into the urine by the kidney. The sequence is that of V-type proton ATPase 116 kDa subunit a 4 (ATP6V0A4) from Homo sapiens (Human).